Consider the following 356-residue polypeptide: tRNA N6-adenosine threonylcarbamoyltransferase (356 aa).

Positions 115 and 119 each coordinate Fe cation. Substrate contacts are provided by residues 138–142 (LVSGG), Asp-171, Gly-184, and Asn-283. Residue Asp-311 coordinates Fe cation.

The protein belongs to the KAE1 / TsaD family. Fe(2+) is required as a cofactor.

It localises to the cytoplasm. It catalyses the reaction L-threonylcarbamoyladenylate + adenosine(37) in tRNA = N(6)-L-threonylcarbamoyladenosine(37) in tRNA + AMP + H(+). Required for the formation of a threonylcarbamoyl group on adenosine at position 37 (t(6)A37) in tRNAs that read codons beginning with adenine. Is involved in the transfer of the threonylcarbamoyl moiety of threonylcarbamoyl-AMP (TC-AMP) to the N6 group of A37, together with TsaE and TsaB. TsaD likely plays a direct catalytic role in this reaction. This Prochlorococcus marinus (strain MIT 9303) protein is tRNA N6-adenosine threonylcarbamoyltransferase.